Consider the following 249-residue polypeptide: Exosome complex component Rrp4 (249 aa).

An S1 motif domain is found at Gly-72–Lys-143. Residues Pro-151–Ile-213 form the KH domain.

The protein belongs to the RRP4 family. In terms of assembly, component of the archaeal exosome complex. Forms a trimer of Rrp4 and/or Csl4 subunits. The trimer associates with a hexameric ring-like arrangement composed of 3 Rrp41-Rrp42 heterodimers.

The protein localises to the cytoplasm. Non-catalytic component of the exosome, which is a complex involved in RNA degradation. Increases the RNA binding and the efficiency of RNA degradation. Confers strong poly(A) specificity to the exosome. This chain is Exosome complex component Rrp4, found in Sulfolobus acidocaldarius (strain ATCC 33909 / DSM 639 / JCM 8929 / NBRC 15157 / NCIMB 11770).